Consider the following 433-residue polypeptide: UPF0761 membrane protein Sde_0901 (433 aa).

Transmembrane regions (helical) follow at residues 46 to 66 (LFAM…FPAF), 103 to 123 (LSAA…TNIE), 142 to 162 (FLLY…GLAM), 185 to 205 (FFSY…FAAV), 217 to 237 (IGGI…GWVV), and 247 to 267 (GAFA…MIIL).

Belongs to the UPF0761 family.

The protein resides in the cell inner membrane. This Saccharophagus degradans (strain 2-40 / ATCC 43961 / DSM 17024) protein is UPF0761 membrane protein Sde_0901.